Reading from the N-terminus, the 634-residue chain is Microtubule-associated protein 70-2 (634 aa).

Residues 1-57 (MSDVSGDGDLSATVTEHEVTPQPPVSSATYPSLTVSASYKESSGGKSSSKRRPIRPS) form a disordered region. Over residues 25–35 (VSSATYPSLTV) the composition is skewed to polar residues. The span at 36 to 47 (SASYKESSGGKS) shows a compositional bias: low complexity. A coiled-coil region spans residues 74–392 (DPVKVELNRL…LRLKVLEETL (319 aa)). Residues 258 to 494 (ILDRMHRQKV…YSFNKATDDS (237 aa)) form a required for targeting to microtubules region. Polar residues-rich tracts occupy residues 393–417 (RGTS…SRRQ) and 443–464 (MRHS…TSKS). 2 disordered regions span residues 393–526 (RGTS…SVPG) and 594–634 (VEKD…KSTQ). A coiled-coil region spans residues 532 to 601 (LQKEVVSLRK…MRVEKDQDAR (70 aa)). The span at 605–616 (FSNSKSPSNTAQ) shows a compositional bias: polar residues.

Belongs to the MAP70 family.

The protein resides in the cytoplasm. Its subcellular location is the cytoskeleton. Its function is as follows. Plant-specific protein that interact with microtubules. In Arabidopsis thaliana (Mouse-ear cress), this protein is Microtubule-associated protein 70-2 (MAP70.2).